We begin with the raw amino-acid sequence, 392 residues long: Galactokinase (392 aa).

Alpha-D-galactose is bound by residues Arg-37, Glu-43, His-44, and Asp-46. Positions 136, 138, 140, and 141 each coordinate ATP. An alpha-D-galactose-binding site is contributed by Asp-186. The Proton acceptor role is filled by Asp-186. Ser-230 bears the Phosphoserine mark. Tyr-236 contributes to the alpha-D-galactose binding site.

This sequence belongs to the GHMP kinase family. GalK subfamily. In terms of assembly, homodimer.

The catalysed reaction is alpha-D-galactose + ATP = alpha-D-galactose 1-phosphate + ADP + H(+). The protein operates within carbohydrate metabolism; galactose metabolism. In terms of biological role, catalyzes the transfer of a phosphate from ATP to alpha-D-galactose and participates in the first committed step in the catabolism of galactose. In Bos taurus (Bovine), this protein is Galactokinase (GALK1).